Reading from the N-terminus, the 127-residue chain is Ycf91-like protein (127 aa).

The protein belongs to the ycf91 family.

The sequence is that of Ycf91-like protein from Nostoc sp. (strain PCC 7120 / SAG 25.82 / UTEX 2576).